The primary structure comprises 807 residues: Glycerol-3-phosphate acyltransferase (807 aa).

The HXXXXD motif motif lies at 308-313 (CHRSHM).

The protein belongs to the GPAT/DAPAT family.

It is found in the cell inner membrane. The catalysed reaction is sn-glycerol 3-phosphate + an acyl-CoA = a 1-acyl-sn-glycero-3-phosphate + CoA. Its pathway is phospholipid metabolism; CDP-diacylglycerol biosynthesis; CDP-diacylglycerol from sn-glycerol 3-phosphate: step 1/3. This Shewanella loihica (strain ATCC BAA-1088 / PV-4) protein is Glycerol-3-phosphate acyltransferase.